We begin with the raw amino-acid sequence, 143 residues long: Large ribosomal subunit protein uL15 (143 aa).

Composition is skewed to basic residues over residues 1–13 and 23–38; these read MIRK…KMRG and KKHR…GNAG. A disordered region spans residues 1–38; sequence MIRKSKKITKMRGSRTCGYGEAKKHRGAGHRGGRGNAG.

Belongs to the universal ribosomal protein uL15 family. Part of the 50S ribosomal subunit.

Functionally, binds to the 23S rRNA. This Methanococcus maripaludis (strain C7 / ATCC BAA-1331) protein is Large ribosomal subunit protein uL15.